The sequence spans 350 residues: Probable arabinogalactan endo-beta-1,4-galactanase A (350 aa).

The first 16 residues, Met1–Ala16, serve as a signal peptide directing secretion. N-linked (GlcNAc...) asparagine glycosylation is present at Asn128. Glu152 functions as the Proton donor in the catalytic mechanism. Glu262 acts as the Nucleophile in catalysis.

This sequence belongs to the glycosyl hydrolase 53 family.

It localises to the secreted. The catalysed reaction is The enzyme specifically hydrolyzes (1-&gt;4)-beta-D-galactosidic linkages in type I arabinogalactans.. Functionally, endogalactanase involved in the degradation of plant cell wall polysaccharides, and more particularly of hairy regions of pectin. This Aspergillus niger (strain ATCC MYA-4892 / CBS 513.88 / FGSC A1513) protein is Probable arabinogalactan endo-beta-1,4-galactanase A (galA).